A 122-amino-acid chain; its full sequence is Small ribosomal subunit protein uS13 (122 aa).

The tract at residues Leu94–Lys122 is disordered. Residues Gln101–Lys122 show a composition bias toward basic residues.

The protein belongs to the universal ribosomal protein uS13 family. As to quaternary structure, part of the 30S ribosomal subunit. Forms a loose heterodimer with protein S19. Forms two bridges to the 50S subunit in the 70S ribosome.

Located at the top of the head of the 30S subunit, it contacts several helices of the 16S rRNA. In the 70S ribosome it contacts the 23S rRNA (bridge B1a) and protein L5 of the 50S subunit (bridge B1b), connecting the 2 subunits; these bridges are implicated in subunit movement. Contacts the tRNAs in the A and P-sites. In Chlamydia trachomatis serovar A (strain ATCC VR-571B / DSM 19440 / HAR-13), this protein is Small ribosomal subunit protein uS13.